Reading from the N-terminus, the 520-residue chain is UBX domain-containing protein 11 (520 aa).

The segment at 1 to 26 (MSSPLASLSKTRKVPLPSEPMNPGRR) is disordered. Residues 76–149 (MAFMTRKLWD…VREMERFLSD (74 aa)) adopt a coiled-coil conformation. The region spanning 230-294 (LEPIPLKLYR…VSDLRNQVYL (65 aa)) is the SEP domain. The UBX domain occupies 392-469 (PAPPLSMLRI…GLVPKAALLL (78 aa)). Residues 476–520 (KSSLKFSPGPCPGPGPGPSPGPGPGPSPGPGPGPSPCPGPSPSPQ) are disordered. Positions 484-520 (GPCPGPGPGPSPGPGPGPSPGPGPGPSPCPGPSPSPQ) are enriched in pro residues. 3 tandem repeats follow at residues 487 to 494 (PGPGPGPS), 495 to 502 (PGPGPGPS), and 503 to 510 (PGPGPGPS). The segment at 487–510 (PGPGPGPSPGPGPGPSPGPGPGPS) is 3 X 8 AA tandem repeats of P-G-P-G-P-G-P-S.

As to quaternary structure, interacts with GNA12, GNA13, RND1, RND2 and RND3.

The protein resides in the cytoplasm. The protein localises to the cytoskeleton. May be involved in the reorganization of actin cytoskeleton mediated by RND1, RND2 and RND3. Promotes RHOA activation mediated by GNA12 and GNA13. This chain is UBX domain-containing protein 11 (UBXN11), found in Homo sapiens (Human).